Here is a 761-residue protein sequence, read N- to C-terminus: Autophagy-related protein 13 (761 aa).

Low complexity-rich tracts occupy residues 1–10, 290–303, and 327–340; these read MLSDFKQQQQ, SSSV…TSLK, and STSP…ISQP. Disordered regions lie at residues 1–25, 277–367, 398–456, 488–507, 544–642, and 691–761; these read MLSD…HDDT, FHKR…SNKS, ISGT…QSDL, DLRL…NMSI, HSSR…SSIS, and YQNV…SRNF. 2 stretches are compositionally biased toward polar residues: residues 344–367 and 400–411; these read PIQN…SNKS and GTSVPRSFSSST. Over residues 429 to 444 the composition is skewed to low complexity; that stretch reads RFASSFGSRASRRYSS. Over residues 445–456 the composition is skewed to polar residues; sequence TSIRQQTPQSDL. Positions 566–590 are enriched in low complexity; that stretch reads QQQQQQQQNQQQSQSPHTNTTSSIH. Basic and acidic residues predominate over residues 600–613; sequence RMKDARPRSEDHQQ. Over residues 614–631 the composition is skewed to polar residues; that stretch reads TKFSAARRSSNISPTTAV. Positions 632 to 642 are enriched in low complexity; the sequence is PSSIGTPSSIS. A compositionally biased stretch (acidic residues) spans 695 to 709; that stretch reads FDDDDEDDNDEEEGD. Residues 710 to 720 are compositionally biased toward basic and acidic residues; the sequence is REGNQLHEGRN. Residues 721 to 730 show a composition bias toward polar residues; sequence STESSQNQSK.

Belongs to the ATG13 family. Fungi subfamily. As to quaternary structure, interacts with ATG1 to form the ATG1-ATG13 kinase complex.

Its subcellular location is the cytoplasm. The protein localises to the preautophagosomal structure. Functionally, plays a key role in autophagy. Activates the atg1 kinase in a nutritional condition dependent manner through the TOR pathway, leading to autophagy. Also involved in cytoplasm to vacuole transport (Cvt) and more specifically in Cvt vesicle formation. Seems to play a role in the switching machinery regulating the conversion between the Cvt pathway and autophagy. Finally, plays an important role in biofilm formation and resistance to antifungal compounds such as fluconazole, itraconazole, terbinafine and caspofungin. The sequence is that of Autophagy-related protein 13 from Candida albicans (strain SC5314 / ATCC MYA-2876) (Yeast).